Reading from the N-terminus, the 433-residue chain is tRNA-2-methylthio-N(6)-dimethylallyladenosine synthase (433 aa).

The MTTase N-terminal domain occupies 4-119 (KKLFIQTLGC…ITQAIKTPKF (116 aa)). [4Fe-4S] cluster-binding residues include C13, C50, C82, C151, C155, and C158. Residues 137–370 (RNSIYKSYIN…QNRHSEILDK (234 aa)) enclose the Radical SAM core domain. In terms of domain architecture, TRAM spans 373–433 (KKQENKTFKV…KRMVLYGEIV (61 aa)).

It belongs to the methylthiotransferase family. MiaB subfamily. In terms of assembly, monomer. It depends on [4Fe-4S] cluster as a cofactor.

Its subcellular location is the cytoplasm. It carries out the reaction N(6)-dimethylallyladenosine(37) in tRNA + (sulfur carrier)-SH + AH2 + 2 S-adenosyl-L-methionine = 2-methylsulfanyl-N(6)-dimethylallyladenosine(37) in tRNA + (sulfur carrier)-H + 5'-deoxyadenosine + L-methionine + A + S-adenosyl-L-homocysteine + 2 H(+). Functionally, catalyzes the methylthiolation of N6-(dimethylallyl)adenosine (i(6)A), leading to the formation of 2-methylthio-N6-(dimethylallyl)adenosine (ms(2)i(6)A) at position 37 in tRNAs that read codons beginning with uridine. This Campylobacter jejuni subsp. jejuni serotype O:2 (strain ATCC 700819 / NCTC 11168) protein is tRNA-2-methylthio-N(6)-dimethylallyladenosine synthase.